Reading from the N-terminus, the 283-residue chain is Co-chaperone protein DjlA (283 aa).

Topologically, residues 1 to 6 (MQIFGK) are periplasmic. Residues 7–30 (ILGGFFGFLFGGFFGAALGIFIGH) form a helical membrane-spanning segment. The Cytoplasmic segment spans residues 31-283 (QFDKAKRMAN…DLIKKEKGIK (253 aa)). Positions 188–197 (QGGGFSGHQS) are enriched in gly residues. The disordered stretch occupies residues 188–210 (QGGGFSGHQSGGSHQQGQWQQAS). A compositionally biased stretch (low complexity) spans 198–210 (GGSHQQGQWQQAS). The J domain occupies 217–283 (DAYNLLGISE…DLIKKEKGIK (67 aa)).

In terms of assembly, homodimer.

The protein localises to the cell inner membrane. Its function is as follows. Regulatory DnaK co-chaperone. Direct interaction between DnaK and DjlA is needed for the induction of the wcaABCDE operon, involved in the synthesis of a colanic acid polysaccharide capsule, possibly through activation of the RcsB/RcsC phosphotransfer signaling pathway. The colanic acid capsule may help the bacterium survive conditions outside the host. This is Co-chaperone protein DjlA from Aliivibrio fischeri (strain ATCC 700601 / ES114) (Vibrio fischeri).